Consider the following 185-residue polypeptide: Thymidine kinase (185 aa).

8–15 (GPMYSGKT) contributes to the ATP binding site. The Proton acceptor role is filled by Glu-85. Phe-117 is a binding site for substrate. Zn(2+)-binding residues include Cys-142 and Cys-145. A substrate-binding site is contributed by 161 to 165 (IIEIG). Zn(2+)-binding residues include Cys-174 and Cys-177.

It belongs to the thymidine kinase family.

It catalyses the reaction thymidine + ATP = dTMP + ADP + H(+). The sequence is that of Thymidine kinase (TK) from Choristoneura fumiferana entomopoxvirus (CfEPV).